A 227-amino-acid polypeptide reads, in one-letter code: MKKAILATKIGMTQIFNADGVLVPVTVLEAGPCVVTQIKTVENDGYSAVQVGFGDKKEKVVEKDANGKKSVAHRHGVNKAQMGHFKKAGVSGKRFVREFKFENADEYNLADEIKADIFAEGDKVDVTAISKGKGFQGAIKRLGQHRGPMAHGSKFHRHQGSNGACSSPSKVFKGKGMPGHMGSVKVTTQNLEVVRVDADKNLLLIKGAVPGAKKALITVKETTKSGK.

The segment at 146–167 (RGPMAHGSKFHRHQGSNGACSS) is disordered.

Belongs to the universal ribosomal protein uL3 family. In terms of assembly, part of the 50S ribosomal subunit. Forms a cluster with proteins L14 and L19.

One of the primary rRNA binding proteins, it binds directly near the 3'-end of the 23S rRNA, where it nucleates assembly of the 50S subunit. In Agathobacter rectalis (strain ATCC 33656 / DSM 3377 / JCM 17463 / KCTC 5835 / VPI 0990) (Eubacterium rectale), this protein is Large ribosomal subunit protein uL3.